The sequence spans 166 residues: Cofilin-1 (166 aa).

Residue alanine 2 is modified to N-acetylalanine. A phosphoserine mark is found at serine 3 and serine 8. An ADF-H domain is found at 4–153 (GVAVSDGVIK…KDRCTLAEKL (150 aa)). Position 13 is an N6-acetyllysine (lysine 13). Threonine 25 is modified (phosphothreonine). The short motif at 30-34 (KKRKK) is the Nuclear localization signal element. Serine 41 carries the phosphoserine modification. The residue at position 68 (tyrosine 68) is a Phosphotyrosine. Lysine 73 carries the N6-acetyllysine modification. Lysine 132 is covalently cross-linked (Glycyl lysine isopeptide (Lys-Gly) (interchain with G-Cter in SUMO2)). Tyrosine 140 carries the post-translational modification Phosphotyrosine. N6-acetyllysine is present on lysine 144. Serine 156 carries the phosphoserine modification.

Belongs to the actin-binding proteins ADF family. As to quaternary structure, can bind G- and F-actin in a 1:1 ratio of cofilin to actin. It is a major component of intranuclear and cytoplasmic actin rods. Interacts with the subcortical maternal complex (SCMC) via interaction with TLE6 and NLRP5. Interacts with C9orf72. Inactivated by phosphorylation on Ser-3. Phosphorylated on Ser-3 in resting cells. Dephosphorylated by PDXP/chronophin; this restores its activity in promoting actin filament depolymerization. The phosphorylation of Ser-24 may prevent recognition of the nuclear localization signal. Phosphorylated via a ARRB1-RAC1-LIMK1-PAK1 cascade upon active ligand stimulation of atypical chemokine receptor ACKR2.

The protein localises to the nucleus matrix. It localises to the cytoplasm. The protein resides in the cytoskeleton. It is found in the cell projection. Its subcellular location is the ruffle membrane. The protein localises to the lamellipodium membrane. It localises to the lamellipodium. The protein resides in the growth cone. It is found in the axon. Functionally, binds to F-actin and exhibits pH-sensitive F-actin depolymerizing activity. Important for normal progress through mitosis and normal cytokinesis. In conjunction with the subcortical maternal complex (SCMC), plays an essential role for zygotes to progress beyond the first embryonic cell divisions via regulation of actin dynamics. Required for the centralization of the mitotic spindle and symmetric division of zygotes. Plays a role in the regulation of cell morphology and cytoskeletal organization in epithelial cells. Required for the up-regulation of atypical chemokine receptor ACKR2 from endosomal compartment to cell membrane, increasing its efficiency in chemokine uptake and degradation. Required for neural tube morphogenesis and neural crest cell migration. This chain is Cofilin-1 (Cfl1), found in Rattus norvegicus (Rat).